The chain runs to 346 residues: WD repeat-containing protein LWD1 (346 aa).

At Met1 the chain carries N-acetylmethionine. WD repeat units follow at residues 79 to 121 (EHPY…SRVE), 133 to 173 (EFCG…VDTQ), 176 to 214 (AHDK…HSTI), and 265 to 305 (RHQA…QHVE).

Its subcellular location is the nucleus. Its function is as follows. Clock protein essential for the proper expression phase and period length of both the oscillator and output genes known to participate in photoperiod sensing. Required for the expression of APRR9, APRR7, and APRR5. Regulated by APRR9 and APRR7 at the transcriptional level, indicating the existence of a positive feedback loop within the circadian clock. May function to delay the expression of the morning genes until dawn approaches. The chain is WD repeat-containing protein LWD1 (LWD1) from Arabidopsis thaliana (Mouse-ear cress).